The chain runs to 432 residues: Testis-specific Y-encoded-like protein 1 (432 aa).

Disordered stretches follow at residues 1 to 31 (MSGRDGGERTPLLEAHSLTTSDCAAGAPDPS), 54 to 110 (ALPP…LETA), and 116 to 135 (TDDSLGNGCQPGEPQGLSRE). Lys-160 is covalently cross-linked (Glycyl lysine isopeptide (Lys-Gly) (interchain with G-Cter in SUMO2)).

This sequence belongs to the nucleosome assembly protein (NAP) family. In terms of processing, ubiquitinated by the CRL2(APPBP2) complex, which recognizes the Arg-Xaa-Xaa-Gly sequence at the C-terminus, leading to its degradation.

The protein resides in the nucleus. It localises to the nucleolus. The sequence is that of Testis-specific Y-encoded-like protein 1 (TSPYL1) from Bos taurus (Bovine).